A 225-amino-acid polypeptide reads, in one-letter code: MAEEPTYTAEQVNDVVHAGLGTVDFFLSRPVDGQSSLGKGSVPPGITAVLTNAAELKAKTAAAAPVKPKRKKIQHMTPAYTIADNGDPNRLPANTPIANPLIPIERPPGRMTDLDLATGTVTQGTYKGVELAKAGKNALLTRFSSGPSLTDQASSKDPNFKRGGEIDGRHKGRHRREWSIAWVGDEVKVYEWCNPTCAPVTATDRKFSCTCGTCPDRCGECEGDN.

Positions 145–157 (SGPSLTDQASSKD) are enriched in polar residues. Residues 145-172 (SGPSLTDQASSKDPNFKRGGEIDGRHKG) form a disordered region. Over residues 158 to 169 (PNFKRGGEIDGR) the composition is skewed to basic and acidic residues. Positions 174, 193, 197, 209, 211, 214, 218, and 221 each coordinate Zn(2+).

This sequence belongs to the paramyxoviruses V protein family.

It is found in the host cytoplasm. Functionally, plays an essential role in the inhibition of host immune response. Prevents the establishment of cellular antiviral state by blocking interferon-alpha/beta (IFN-alpha/beta) production and signaling pathway. Interacts with host IFIH1/MDA5 and DHX58/LGP2 to inhibit the transduction pathway involved in the activation of IFN-beta promoter, thus protecting the virus against cell antiviral state. Efficiently blocks type I and type II IFN signaling following infection, probably by targeting host STAT1 for proteasomal degradation. This chain is Non-structural protein V (P/V), found in Simian virus 41 (SV41).